A 421-amino-acid chain; its full sequence is Histidine--tRNA ligase (421 aa).

The protein belongs to the class-II aminoacyl-tRNA synthetase family. Homodimer.

The protein localises to the cytoplasm. The enzyme catalyses tRNA(His) + L-histidine + ATP = L-histidyl-tRNA(His) + AMP + diphosphate + H(+). This is Histidine--tRNA ligase from Ureaplasma urealyticum serovar 10 (strain ATCC 33699 / Western).